Here is a 662-residue protein sequence, read N- to C-terminus: tRNA 5-methylaminomethyl-2-thiouridine biosynthesis bifunctional protein MnmC (662 aa).

Residues 1 to 245 form a tRNA (mnm(5)s(2)U34)-methyltransferase region; sequence MKQNAIQPAN…KREMLTGEMA (245 aa). Residues 270–662 are FAD-dependent cmnm(5)s(2)U34 oxidoreductase; that stretch reads IGGGIASALL…RKLLKGKAVK (393 aa).

It in the N-terminal section; belongs to the methyltransferase superfamily. tRNA (mnm(5)s(2)U34)-methyltransferase family. In the C-terminal section; belongs to the DAO family. FAD is required as a cofactor.

Its subcellular location is the cytoplasm. The catalysed reaction is 5-aminomethyl-2-thiouridine(34) in tRNA + S-adenosyl-L-methionine = 5-methylaminomethyl-2-thiouridine(34) in tRNA + S-adenosyl-L-homocysteine + H(+). Functionally, catalyzes the last two steps in the biosynthesis of 5-methylaminomethyl-2-thiouridine (mnm(5)s(2)U) at the wobble position (U34) in tRNA. Catalyzes the FAD-dependent demodification of cmnm(5)s(2)U34 to nm(5)s(2)U34, followed by the transfer of a methyl group from S-adenosyl-L-methionine to nm(5)s(2)U34, to form mnm(5)s(2)U34. This is tRNA 5-methylaminomethyl-2-thiouridine biosynthesis bifunctional protein MnmC from Klebsiella pneumoniae subsp. pneumoniae (strain ATCC 700721 / MGH 78578).